The primary structure comprises 615 residues: Alpha-1,3-galactosidase B (615 aa).

Residues 1–23 (MRTFLSLKTCLLSALLLCVNSIA) form the signal peptide. 6 PbH1 repeats span residues 282–313 (SKNI…HFMG), 423–445 (TPDA…LVST), 446–467 (PGKV…LIAG), 478–500 (VKDV…YQFC), 520–541 (HRNI…LFAR), and 543–573 (VNGL…TLEA).

Belongs to the glycosyl hydrolase 110 family. B subfamily.

The enzyme catalyses Hydrolysis of terminal, non-reducing branched (1-&gt;3)-alpha-D-galactosidic residues, producing free D-galactose.. The catalysed reaction is Hydrolysis of terminal, non-reducing linear (1-&gt;3)-alpha-D-galactosidic residues, producing free D-galactose.. It carries out the reaction Hydrolysis of terminal, non-reducing alpha-D-galactose residues in alpha-D-galactosides, including galactose oligosaccharides, galactomannans and galactolipids.. In terms of biological role, alpha-galactosidase. Removes both branched alpha-1,3-linked galactose residues of blood group B antigens and linear alpha-1,3-linked galactose structures. The chain is Alpha-1,3-galactosidase B (glaB) from Bacteroides thetaiotaomicron (strain ATCC 29148 / DSM 2079 / JCM 5827 / CCUG 10774 / NCTC 10582 / VPI-5482 / E50).